The primary structure comprises 1218 residues: ATP-dependent helicase/deoxyribonuclease subunit B (1218 aa).

The UvrD-like helicase ATP-binding domain occupies 1–279 (MRFIVGRAGT…VFLTETHRFE (279 aa)). ATP is bound at residue 6-13 (GRAGTGKS). A UvrD-like helicase C-terminal domain is found at 281–588 (AGLKHLERFY…LVGSLDRSRN (308 aa)). Cysteine 786 is a [4Fe-4S] cluster binding site. The tract at residues 987–1006 (LAEGSKGSEGSEGSEDSEDS) is disordered. Residues cysteine 1126, cysteine 1129, and cysteine 1135 each coordinate [4Fe-4S] cluster. Polar residues predominate over residues 1160-1169 (RVQSQDSEQY). Residues 1160-1218 (RVQSQDSEQYPEQHPPTSVPGETSRRALQKDGGNSPRGQELIWLGEDEAGAGKEDDGHE) are disordered. The segment covering 1209 to 1218 (GAGKEDDGHE) has biased composition (basic and acidic residues).

The protein belongs to the helicase family. AddB/RexB type 1 subfamily. As to quaternary structure, heterodimer of AddA and AddB. It depends on Mg(2+) as a cofactor. The cofactor is [4Fe-4S] cluster.

The heterodimer acts as both an ATP-dependent DNA helicase and an ATP-dependent, dual-direction single-stranded exonuclease. Recognizes the chi site generating a DNA molecule suitable for the initiation of homologous recombination. The AddB subunit has 5' -&gt; 3' nuclease activity but not helicase activity. The chain is ATP-dependent helicase/deoxyribonuclease subunit B from Desulfitobacterium hafniense (strain DSM 10664 / DCB-2).